Reading from the N-terminus, the 291-residue chain is UPF0173 metal-dependent hydrolase Rmet_5695 (291 aa).

The protein belongs to the UPF0173 family.

This Cupriavidus metallidurans (strain ATCC 43123 / DSM 2839 / NBRC 102507 / CH34) (Ralstonia metallidurans) protein is UPF0173 metal-dependent hydrolase Rmet_5695.